A 312-amino-acid polypeptide reads, in one-letter code: Putative mitochondrial transporter UCP3 (312 aa).

Over 1–10 (MVGLKPSDVP) the chain is Mitochondrial intermembrane. The helical transmembrane segment at 11-32 (PTMAVKFLGAGTAACFADLVTF) threads the bilayer. Solcar repeat units follow at residues 11–105 (PTMA…VKQV), 114–206 (SSLT…LKEK), and 215–300 (DNFP…LKRA). The Mitochondrial matrix portion of the chain corresponds to 33–76 (PLDTAKVRLQIQGENQAVQTARLVQYRGVLGTILTMVRTEGPCS). A helical membrane pass occupies residues 77 to 99 (PYNGLVAGLQRQMSFASIRIGLY). At 100-119 (DSVKQVYTPKGADNSSLTTR) the chain is on the mitochondrial intermembrane side. Residues 120-136 (ILAGCTTGAMAVTCAQP) traverse the membrane as a helical segment. The Mitochondrial matrix segment spans residues 137-183 (TDVVKVRFQASIHLGPSRSDRKYSGTMDAYRTIAREEGVRGLWKGTL). Residues 184–200 (PNIMRNAIVNCAEVVTY) form a helical membrane-spanning segment. Residues 201-217 (DILKEKLLDYHLLTDNF) are Mitochondrial intermembrane-facing. The chain crosses the membrane as a helical span at residues 218-237 (PCHFVSAFGAGFCATVVASP). Residues 238–271 (VDVVKTRYMNSPPGQYFSPLDCMIKMVAQEGPTA) are Mitochondrial matrix-facing. Residues 272–294 (FYKGFTPSFLRLGSWNVVMFVTY) traverse the membrane as a helical segment. A purine nucleotide binding region spans residues 279–301 (SFLRLGSWNVVMFVTYEQLKRAL). Residues 295–312 (EQLKRALMKVQMLRESPF) lie on the Mitochondrial intermembrane side of the membrane.

It belongs to the mitochondrial carrier (TC 2.A.29) family. Interacts with HAX1; the interaction is direct and calcium-dependent. In terms of tissue distribution, only in skeletal muscle and heart. Also expressed in white and brown adipose tissues. Is more expressed in glycolytic than in oxidative skeletal muscles.

The protein resides in the mitochondrion inner membrane. With respect to regulation, the proton transporter activity is activated by fatty acids (in vitro). The proton transporter activity is inhibited by ATP and ADP (in vitro). The effect of Ubiquinone/coenzyme Q10 on the proton transporter activity in reconstituted membranes is unclear (in vitro). Putative transmembrane transporter that plays a role in mitochondrial metabolism via an as yet unclear mechanism. Originally, this mitochondrial protein was thought to act as a proton transmembrane transporter from the mitochondrial intermembrane space into the matrix, causing proton leaks through the inner mitochondrial membrane, thereby uncoupling mitochondrial membrane potential generation from ATP synthesis. However, this function is controversial and uncoupling may not be the function, or at least not the main function, but rather a consequence of more conventional metabolite transporter activity. In Homo sapiens (Human), this protein is Putative mitochondrial transporter UCP3.